The chain runs to 100 residues: NAD(P)H-quinone oxidoreductase subunit 4L, chloroplastic (100 aa).

3 helical membrane-spanning segments follow: residues 1–21 (MIEN…YGLI), 29–49 (ALMC…TFSN), and 63–83 (ISVI…ILII).

Belongs to the complex I subunit 4L family. NDH is composed of at least 16 different subunits, 5 of which are encoded in the nucleus.

It is found in the plastid. The protein resides in the chloroplast thylakoid membrane. The enzyme catalyses a plastoquinone + NADH + (n+1) H(+)(in) = a plastoquinol + NAD(+) + n H(+)(out). It carries out the reaction a plastoquinone + NADPH + (n+1) H(+)(in) = a plastoquinol + NADP(+) + n H(+)(out). Functionally, NDH shuttles electrons from NAD(P)H:plastoquinone, via FMN and iron-sulfur (Fe-S) centers, to quinones in the photosynthetic chain and possibly in a chloroplast respiratory chain. The immediate electron acceptor for the enzyme in this species is believed to be plastoquinone. Couples the redox reaction to proton translocation, and thus conserves the redox energy in a proton gradient. The sequence is that of NAD(P)H-quinone oxidoreductase subunit 4L, chloroplastic from Angiopteris evecta (Mule's foot fern).